We begin with the raw amino-acid sequence, 90 residues long: Probable Fe(2+)-trafficking protein (90 aa).

The protein belongs to the Fe(2+)-trafficking protein family.

In terms of biological role, could be a mediator in iron transactions between iron acquisition and iron-requiring processes, such as synthesis and/or repair of Fe-S clusters in biosynthetic enzymes. The sequence is that of Probable Fe(2+)-trafficking protein from Halorhodospira halophila (strain DSM 244 / SL1) (Ectothiorhodospira halophila (strain DSM 244 / SL1)).